The primary structure comprises 415 residues: U-box domain-containing protein 29 (415 aa).

The 75-residue stretch at 11–85 (TVPSFFKCPI…NIWSDSIGRR (75 aa)) folds into the U-box domain. ARM repeat units follow at residues 221–263 (KSKL…TISK) and 265–307 (KRVR…TLSS).

In terms of assembly, binds to SD129 and SD25.

It carries out the reaction S-ubiquitinyl-[E2 ubiquitin-conjugating enzyme]-L-cysteine + [acceptor protein]-L-lysine = [E2 ubiquitin-conjugating enzyme]-L-cysteine + N(6)-ubiquitinyl-[acceptor protein]-L-lysine.. Its pathway is protein modification; protein ubiquitination. Functions as an E3 ubiquitin ligase. The chain is U-box domain-containing protein 29 (PUB29) from Arabidopsis thaliana (Mouse-ear cress).